A 351-amino-acid chain; its full sequence is Anthranilate phosphoribosyltransferase (351 aa).

5-phospho-alpha-D-ribose 1-diphosphate-binding positions include Gly80, 83–84, Thr88, 90–93, 108–116, and Ser120; these read GD, NIST, and KHGNRSITS. Anthranilate is bound at residue Gly80. Ser92 is a binding site for Mg(2+). An anthranilate-binding site is contributed by Asn111. Residue Arg166 coordinates anthranilate. 2 residues coordinate Mg(2+): Asp229 and Glu230.

This sequence belongs to the anthranilate phosphoribosyltransferase family. In terms of assembly, homodimer. Requires Mg(2+) as cofactor.

The catalysed reaction is N-(5-phospho-beta-D-ribosyl)anthranilate + diphosphate = 5-phospho-alpha-D-ribose 1-diphosphate + anthranilate. It functions in the pathway amino-acid biosynthesis; L-tryptophan biosynthesis; L-tryptophan from chorismate: step 2/5. Catalyzes the transfer of the phosphoribosyl group of 5-phosphorylribose-1-pyrophosphate (PRPP) to anthranilate to yield N-(5'-phosphoribosyl)-anthranilate (PRA). This Chlorobaculum tepidum (strain ATCC 49652 / DSM 12025 / NBRC 103806 / TLS) (Chlorobium tepidum) protein is Anthranilate phosphoribosyltransferase.